The chain runs to 143 residues: MSRHYEVVFLVHPDQSEQVPAMIERYKSLIEGGNGTIHRLEDWGRRQLAYPIQNLVKAHYVLLNIEVDQAVLSELVESFRFNDAVLRHLVVKRDGPDTEQSLIMKSKDEKGDKHERSERRRRDDEEGDVPAATDTDGDNAEAA.

The tract at residues 97 to 143 is disordered; that stretch reads DTEQSLIMKSKDEKGDKHERSERRRRDDEEGDVPAATDTDGDNAEAA. Basic and acidic residues predominate over residues 105–124; the sequence is KSKDEKGDKHERSERRRRDD.

The protein belongs to the bacterial ribosomal protein bS6 family.

Functionally, binds together with bS18 to 16S ribosomal RNA. This Xanthomonas oryzae pv. oryzae (strain MAFF 311018) protein is Small ribosomal subunit protein bS6.